The primary structure comprises 578 residues: MRLSKLFMPTLKEAPSDAIIASNKLMLRAALARKISNGLYSYLPLGVRVLNKISNIIREEMDAIGSNECIMPILVSKELLTPSGRWERFKKELFRLKDRNDVDMAMGPTHEEAFTITAQNEIQSYKDFPLTLYQIHTKFRDEIRPRFGVIRSKEFTMKDAYSFHITKECLDKTYNDMSGAYTKIFKRMGLDTVSVKADSGAMGGEGSEEFMVLSEVGEETIIFCSKCDYRANVEKANVKEEEAAKSYTDKALEEVHTPDIKTINDLEKFFNTSSKNFIKSIIYKTEEDEIILVAIRGDLEINETKLSNALGGLDIELADEETVKEVTGARVGFASPIGLKKKIRIFADNSIKSVADAIVGGNKDDTHIKNVNIERDFNIDVWGDFRTAKEGDRCPQCGETLYQKKGLELGHIFKLGDKYTEAFNFKVLDENNKEITPIMGCYGIGVNRALASVIEQNYDDKGIIFPISVAPYEAIVVAIDKETEDSFKKAEEIYNTLNSIGVETMFDDRKERLGVKLNDCDLIGIPIRIIVGKKSLQKGVVEFKLRKSQESVEVKVEDIIEYVKTKKQELFNEINSRL.

It belongs to the class-II aminoacyl-tRNA synthetase family. ProS type 1 subfamily. Homodimer.

The protein localises to the cytoplasm. It carries out the reaction tRNA(Pro) + L-proline + ATP = L-prolyl-tRNA(Pro) + AMP + diphosphate. In terms of biological role, catalyzes the attachment of proline to tRNA(Pro) in a two-step reaction: proline is first activated by ATP to form Pro-AMP and then transferred to the acceptor end of tRNA(Pro). As ProRS can inadvertently accommodate and process non-cognate amino acids such as alanine and cysteine, to avoid such errors it has two additional distinct editing activities against alanine. One activity is designated as 'pretransfer' editing and involves the tRNA(Pro)-independent hydrolysis of activated Ala-AMP. The other activity is designated 'posttransfer' editing and involves deacylation of mischarged Ala-tRNA(Pro). The misacylated Cys-tRNA(Pro) is not edited by ProRS. This Brachyspira hyodysenteriae (strain ATCC 49526 / WA1) protein is Proline--tRNA ligase.